The following is a 471-amino-acid chain: 5-hydroxytryptamine receptor 2A (471 aa).

At 1–80 the chain is on the extracellular side; sequence MEILCEDNIS…LQEKNWSALL (80 aa). Residues Asn8, Asn38, Asn44, Asn51, and Asn54 are each glycosylated (N-linked (GlcNAc...) asparagine). Residues 81–97 traverse the membrane as a helical segment; the sequence is TTVVIILTIAGNILVIM. Residues 98 to 111 lie on the Cytoplasmic side of the membrane; the sequence is AVSLEKKLQNATNY. Residues 112-137 form a helical membrane-spanning segment; it reads FLMSLAIADMLLGFLVMPVSMLTILY. Residues 138-146 are Extracellular-facing; it reads GYRWPLPSK. Residues 147–171 traverse the membrane as a helical segment; that stretch reads LCAIWIYLDVLFSTASIMHLCAISL. The cysteines at positions 148 and 227 are disulfide-linked. Asp155 provides a ligand contact to serotonin. The short motif at 172 to 174 is the DRY motif; important for ligand-induced conformation changes element; that stretch reads DRY. Over 172–191 the chain is Cytoplasmic; sequence DRYVAIQNPIHHSRFNSRTK. The chain crosses the membrane as a helical span at residues 192 to 215; sequence AFLKIIAVWTISVGISMPIPVFGL. The Extracellular segment spans residues 216 to 232; the sequence is QDDSKVFKEGSCLLADD. Residues 233–258 traverse the membrane as a helical segment; the sequence is NFVLIGSFVAFFIPLTIMVITYFLTI. The Cytoplasmic portion of the chain corresponds to 259 to 322; sequence KSLQKEATLC…QSISNEQKAC (64 aa). Position 280 is a phosphoserine (Ser280). A helical membrane pass occupies residues 323–348; that stretch reads KVLGIVFFLFVVMWCPFFITNIMAVI. Residue Asn343 coordinates serotonin. Cys349 and Cys353 are oxidised to a cystine. At 349 to 356 the chain is on the extracellular side; sequence CKESCNEN. The chain crosses the membrane as a helical span at residues 357–382; sequence VIGALLNVFVWIGYLSSAVNPLVYTL. The NPxxY motif; important for ligand-induced conformation changes and signaling motif lies at 376–380; sequence NPLVY. At 383-471 the chain is on the cytoplasmic side; the sequence is FNKTYRSAFS…ETVNEKVSCV (89 aa). Residues 469–471 carry the PDZ-binding motif; sequence SCV.

Belongs to the G-protein coupled receptor 1 family. As to quaternary structure, interacts (via C-terminus) with MPDZ and PATJ. May interact (via C-terminus) with MPP3, PRDX6, DLG4, DLG1, CASK, APBA1 and MAGI2. Interacts with GRM2 and DRD2; this may affect signaling. In terms of tissue distribution, detected in adult intestine, especially in mucosal epithelium, longitudinal and circular layers of muscularis externa and myenteric plexuses. Highly expressed in Paneth cells, and detected at lower levels in enterocytes (at protein level). Detected in brain cortex.

The protein localises to the cell membrane. It is found in the cell projection. The protein resides in the axon. Its subcellular location is the cytoplasmic vesicle. It localises to the membrane. The protein localises to the caveola. It is found in the dendrite. The protein resides in the presynapse. Its activity is regulated as follows. G-protein coupled receptor activity is regulated by lipids: oleamide increases HTR2A-mediated activity. In terms of biological role, G-protein coupled receptor for 5-hydroxytryptamine (serotonin). Also functions as a receptor for various drugs and psychoactive substances, including mescaline, psilocybin, 1-(2,5-dimethoxy-4-iodophenyl)-2-aminopropane (DOI) and lysergic acid diethylamide (LSD). Ligand binding causes a conformation change that triggers signaling via guanine nucleotide-binding proteins (G proteins) and modulates the activity of downstream effectors. HTR2A is coupled to G(q)/G(11) G alpha proteins and activates phospholipase C-beta, releasing diacylglycerol (DAG) and inositol 1,4,5-trisphosphate (IP3) second messengers that modulate the activity of phosphatidylinositol 3-kinase and promote the release of Ca(2+) ions from intracellular stores, respectively. Beta-arrestin family members inhibit signaling via G proteins and mediate activation of alternative signaling pathways. Affects neural activity, perception, cognition and mood. Plays a role in the regulation of behavior, including responses to anxiogenic situations and psychoactive substances. Plays a role in intestinal smooth muscle contraction, and may play a role in arterial vasoconstriction. In Rattus norvegicus (Rat), this protein is 5-hydroxytryptamine receptor 2A (Htr2a).